Here is a 485-residue protein sequence, read N- to C-terminus: UDP-N-acetylmuramate--L-alanine ligase (485 aa).

An ATP-binding site is contributed by 120-126; the sequence is GSHGKTT.

Belongs to the MurCDEF family.

It localises to the cytoplasm. The catalysed reaction is UDP-N-acetyl-alpha-D-muramate + L-alanine + ATP = UDP-N-acetyl-alpha-D-muramoyl-L-alanine + ADP + phosphate + H(+). Its pathway is cell wall biogenesis; peptidoglycan biosynthesis. In terms of biological role, cell wall formation. The sequence is that of UDP-N-acetylmuramate--L-alanine ligase from Rickettsia massiliae (strain Mtu5).